The primary structure comprises 216 residues: Probable GTP-binding protein EngB (216 aa).

The EngB-type G domain maps to 21–192 (DAPQIALAGR…WRELRALAAG (172 aa)). GTP-binding positions include 29 to 36 (GRSNVGKS), 56 to 60 (GKTRS), 75 to 78 (DLPG), 142 to 145 (TKGD), and 170 to 173 (VTAS). Residues serine 36 and threonine 58 each contribute to the Mg(2+) site. A disordered region spans residues 195-216 (SADDEAEDAPSDTIDAIDDVTA). Over residues 196–216 (ADDEAEDAPSDTIDAIDDVTA) the composition is skewed to acidic residues.

This sequence belongs to the TRAFAC class TrmE-Era-EngA-EngB-Septin-like GTPase superfamily. EngB GTPase family. Mg(2+) is required as a cofactor.

Its function is as follows. Necessary for normal cell division and for the maintenance of normal septation. This chain is Probable GTP-binding protein EngB, found in Nitratidesulfovibrio vulgaris (strain DP4) (Desulfovibrio vulgaris).